The following is an 881-amino-acid chain: DNA replication helicase (881 aa).

90–97 (GNAGSGKS) lines the ATP pocket.

The protein belongs to the herpesviridae helicase family. In terms of assembly, associates with the primase and the primase-associated factor to form the helicase-primase complex.

The protein resides in the host nucleus. In terms of biological role, component of the helicase/primase complex. Unwinds the DNA at the replication forks and generates single-stranded DNA for both leading and lagging strand synthesis. The primase synthesizes short RNA primers on the lagging strand that the polymerase elongates using dNTPs. Possesses helicase-like motifs and therefore may act as the helicase subunit of the complex. In Homo sapiens (Human), this protein is DNA replication helicase.